The sequence spans 297 residues: MDPGKDKEGVPQPSGPPARKKFVIPLDEDEVPPGVAKPLFRSTQSLPTVDTSAQAAPQTYAEYAISQPLEGAGATCPTGSEPLAGETPNQALKPGAKSNSIIVSPRQRGNPVLKFVRNVPWEFGDVIPDYVLGQSTCALFLSLRYHNLHPDYIHGRLQSLGKNFALRVLLVQVDVKDPQQALKELAKMCILADCTLILAWSPEEAGRYLETYKAYEQKPADLLMEKLEQDFVSRVTECLTTVKSVNKTDSQTLLTTFGSLEQLIAASREDLALCPGLGPQKARRLFDVLHEPFLKVP.

N-acetylmethionine is present on M1. The segment at 1 to 39 (MDPGKDKEGVPQPSGPPARKKFVIPLDEDEVPPGVAKPL) is disordered. The Nuclear localization signal motif lies at 17-23 (PARKKFV). Glycyl lysine isopeptide (Lys-Gly) (interchain with G-Cter in SUMO2) cross-links involve residues K21 and K37. A DNA-binding region spans residues 134–156 (QSTCALFLSLRYHNLHPDYIHGR). The segment at 220–297 (ADLLMEKLEQ…VLHEPFLKVP (78 aa)) is hhH2, dimerization with ERCC4/XPF. Residue K243 forms a Glycyl lysine isopeptide (Lys-Gly) (interchain with G-Cter in SUMO2) linkage.

The protein belongs to the ERCC1/RAD10/SWI10 family. Heterodimer composed of ERCC1 isoform 1 and ERCC4/XPF. Interacts with USP45. As to quaternary structure, does not interact with ERCC4/XPF. Post-translationally, ubiquitinated with both 'Lys-48' and 'Lys-63' linkages. Deubiquitinated by USP45.

The protein localises to the nucleus. It localises to the cytoplasm. Non-catalytic component of a structure-specific DNA repair endonuclease responsible for the 5'-incision during DNA repair. Responsible, in conjunction with SLX4, for the first step in the repair of interstrand cross-links (ICL). Participates in the processing of anaphase bridge-generating DNA structures, which consist in incompletely processed DNA lesions arising during S or G2 phase, and can result in cytokinesis failure. Also required for homology-directed repair (HDR) of DNA double-strand breaks, in conjunction with SLX4. In terms of biological role, not functional in the nucleotide excision repair pathway. The polypeptide is DNA excision repair protein ERCC-1 (ERCC1) (Homo sapiens (Human)).